A 168-amino-acid polypeptide reads, in one-letter code: Endoribonuclease YbeY (168 aa).

Zn(2+)-binding residues include H126, H130, and H136.

The protein belongs to the endoribonuclease YbeY family. It depends on Zn(2+) as a cofactor.

It localises to the cytoplasm. Functionally, single strand-specific metallo-endoribonuclease involved in late-stage 70S ribosome quality control and in maturation of the 3' terminus of the 16S rRNA. The sequence is that of Endoribonuclease YbeY from Sinorhizobium medicae (strain WSM419) (Ensifer medicae).